The following is a 525-amino-acid chain: GMP synthase [glutamine-hydrolyzing] (525 aa).

One can recognise a Glutamine amidotransferase type-1 domain in the interval 8–207 (KILILDFGSQ…ALEICGCPAN (200 aa)). The active-site Nucleophile is the Cys85. Catalysis depends on residues His181 and Glu183. The GMPS ATP-PPase domain maps to 208–400 (WKPSSIIEDA…LGLPYDMLYR (193 aa)). ATP is bound at residue 235 to 241 (SGGVDSS).

Homodimer.

It catalyses the reaction XMP + L-glutamine + ATP + H2O = GMP + L-glutamate + AMP + diphosphate + 2 H(+). The protein operates within purine metabolism; GMP biosynthesis; GMP from XMP (L-Gln route): step 1/1. In terms of biological role, catalyzes the synthesis of GMP from XMP. The polypeptide is GMP synthase [glutamine-hydrolyzing] (Shewanella pealeana (strain ATCC 700345 / ANG-SQ1)).